Here is a 97-residue protein sequence, read N- to C-terminus: Aspartyl/glutamyl-tRNA(Asn/Gln) amidotransferase subunit C (97 aa).

The protein belongs to the GatC family. As to quaternary structure, heterotrimer of A, B and C subunits.

It catalyses the reaction L-glutamyl-tRNA(Gln) + L-glutamine + ATP + H2O = L-glutaminyl-tRNA(Gln) + L-glutamate + ADP + phosphate + H(+). The catalysed reaction is L-aspartyl-tRNA(Asn) + L-glutamine + ATP + H2O = L-asparaginyl-tRNA(Asn) + L-glutamate + ADP + phosphate + 2 H(+). Its function is as follows. Allows the formation of correctly charged Asn-tRNA(Asn) or Gln-tRNA(Gln) through the transamidation of misacylated Asp-tRNA(Asn) or Glu-tRNA(Gln) in organisms which lack either or both of asparaginyl-tRNA or glutaminyl-tRNA synthetases. The reaction takes place in the presence of glutamine and ATP through an activated phospho-Asp-tRNA(Asn) or phospho-Glu-tRNA(Gln). This Prochlorococcus marinus (strain MIT 9215) protein is Aspartyl/glutamyl-tRNA(Asn/Gln) amidotransferase subunit C.